The sequence spans 361 residues: Phenylalanine--tRNA ligase alpha subunit (361 aa).

Glutamate 260 contacts Mg(2+).

The protein belongs to the class-II aminoacyl-tRNA synthetase family. Phe-tRNA synthetase alpha subunit type 1 subfamily. Tetramer of two alpha and two beta subunits. It depends on Mg(2+) as a cofactor.

It localises to the cytoplasm. The catalysed reaction is tRNA(Phe) + L-phenylalanine + ATP = L-phenylalanyl-tRNA(Phe) + AMP + diphosphate + H(+). The sequence is that of Phenylalanine--tRNA ligase alpha subunit from Bartonella bacilliformis (strain ATCC 35685 / KC583 / Herrer 020/F12,63).